We begin with the raw amino-acid sequence, 350 residues long: tRNA uridine(34) hydroxylase (350 aa).

Positions 146 to 240 (DDPDALFIDM…YARKAREQGL (95 aa)) constitute a Rhodanese domain. The Cysteine persulfide intermediate role is filled by Cys200.

This sequence belongs to the TrhO family.

The enzyme catalyses uridine(34) in tRNA + AH2 + O2 = 5-hydroxyuridine(34) in tRNA + A + H2O. Functionally, catalyzes oxygen-dependent 5-hydroxyuridine (ho5U) modification at position 34 in tRNAs, the first step in 5-carboxymethoxyuridine (cmo5U) biosynthesis. May be part of an alternate pathway, which is able to bypass cmo5U biogenesis in a subset of tRNAs under aerobic conditions. The sequence is that of tRNA uridine(34) hydroxylase from Escherichia coli O17:K52:H18 (strain UMN026 / ExPEC).